A 142-amino-acid polypeptide reads, in one-letter code: Large ribosomal subunit protein uL16 (142 aa).

This sequence belongs to the universal ribosomal protein uL16 family. In terms of assembly, part of the 50S ribosomal subunit.

Its function is as follows. Binds 23S rRNA and is also seen to make contacts with the A and possibly P site tRNAs. The sequence is that of Large ribosomal subunit protein uL16 from Phenylobacterium zucineum (strain HLK1).